We begin with the raw amino-acid sequence, 206 residues long: Small ribosomal subunit protein uS4 (206 aa).

Residues 96-161 (RRLDNVVYRM…QGRIQAALAL (66 aa)) enclose the S4 RNA-binding domain.

Belongs to the universal ribosomal protein uS4 family. Part of the 30S ribosomal subunit. Contacts protein S5. The interaction surface between S4 and S5 is involved in control of translational fidelity.

Functionally, one of the primary rRNA binding proteins, it binds directly to 16S rRNA where it nucleates assembly of the body of the 30S subunit. With S5 and S12 plays an important role in translational accuracy. This is Small ribosomal subunit protein uS4 from Legionella pneumophila (strain Corby).